A 306-amino-acid polypeptide reads, in one-letter code: Lipoyl synthase (306 aa).

[4Fe-4S] cluster is bound by residues Cys-52, Cys-57, Cys-63, Cys-78, Cys-82, Cys-85, and Ser-289. One can recognise a Radical SAM core domain in the interval Trp-64 to Lys-278.

Belongs to the radical SAM superfamily. Lipoyl synthase family. Requires [4Fe-4S] cluster as cofactor.

It is found in the cytoplasm. The enzyme catalyses [[Fe-S] cluster scaffold protein carrying a second [4Fe-4S](2+) cluster] + N(6)-octanoyl-L-lysyl-[protein] + 2 oxidized [2Fe-2S]-[ferredoxin] + 2 S-adenosyl-L-methionine + 4 H(+) = [[Fe-S] cluster scaffold protein] + N(6)-[(R)-dihydrolipoyl]-L-lysyl-[protein] + 4 Fe(3+) + 2 hydrogen sulfide + 2 5'-deoxyadenosine + 2 L-methionine + 2 reduced [2Fe-2S]-[ferredoxin]. Its pathway is protein modification; protein lipoylation via endogenous pathway; protein N(6)-(lipoyl)lysine from octanoyl-[acyl-carrier-protein]: step 2/2. Its function is as follows. Catalyzes the radical-mediated insertion of two sulfur atoms into the C-6 and C-8 positions of the octanoyl moiety bound to the lipoyl domains of lipoate-dependent enzymes, thereby converting the octanoylated domains into lipoylated derivatives. The protein is Lipoyl synthase of Leptospira biflexa serovar Patoc (strain Patoc 1 / Ames).